A 315-amino-acid chain; its full sequence is MAAAIEIPTIVFPNSSAQQRMPVVGMGSAPDFTCKKDTKEAIIEAVKQGYRHFDTAAAYGSEQALGEALKEAIHLGLVSRQDLFVTSKLWVTENHPHLVLPALRKSLKTLQLEYLDLYLIHWPLSSQPGKFSFPIEVEDLLPFDVKGVWESMEECQKLGLTKAIGVSNFSVKKLQNLLSVATIRPVVDQVEMNLAWQQKKLREFCKENGIIVTAFSPLRKGASRGPNEVMENDVLKEIAEAHGKSIAQVSLRWLYEQGVTFVPKSYDKERMNQNLHIFDWALTEQDHHKISQISQSRLISGPTKPQLADLWDDQI.

Tyr59 serves as the catalytic Proton donor. Residue His121 coordinates substrate. 216–274 (SPLRKGASRGPNEVMENDVLKEIAEAHGKSIAQVSLRWLYEQGVTFVPKSYDKERMNQN) serves as a coordination point for NADP(+).

It belongs to the aldo/keto reductase family. Monomer.

The catalysed reaction is 4-coumaroyl-CoA + 3 malonyl-CoA + NADPH + 4 H(+) = isoliquiritigenin + 3 CO2 + NADP(+) + 4 CoA + H2O. The protein operates within phytoalexin biosynthesis; glyceollin biosynthesis. Co-acts with chalcone synthase in formation of 4,2',4'-trihydroxychalcone, involved in the biosynthesis of glyceollin type phytoalexins. The polypeptide is NAD(P)H-dependent 6'-deoxychalcone synthase (Glycine max (Soybean)).